The primary structure comprises 777 residues: Protein argonaute (777 aa).

Residues 1–107 (MAPVQAADEM…ARLDDALEEA (107 aa)) are N-terminal domain. The tract at residues 108–182 (LPKYAAVKKR…TIGMRYDIEA (75 aa)) is linker L1. The PAZ domain stretch occupies residues 183–243 (SLRDLLEAGI…VNVNDAKLEG (61 aa)). The linker L2 stretch occupies residues 244 to 341 (SKENFTRCLS…DRTGAKSAEY (98 aa)). The mid domain stretch occupies residues 342-509 (AWRGLSQFGP…SIATYAKLNG (168 aa)). Residues 445–757 (GIVVLFEDHA…IAELLGRLKS (313 aa)) enclose the Piwi domain. Residues 510-777 (TPWTVNHDKA…IKLKWSRWFL (268 aa)) form a PIWI domain region. Position 777 (L777) interacts with Mg(2+).

Belongs to the argonaute family. Long pAgo subfamily. Mg(2+) is required as a cofactor.

In terms of biological role, a catalytically inactive argonaute protein. Binds 5'-phosphorylated RNA as the guide (gRNA) and short DNA as target DNA (tDNA); does not bind other nucleic acid combinations, does not bind tDNA alone. Has highest affinity for gRNA that begins with 5'-phospho-U and poor affinity for gRNA with 5'-OH. Upon expression in E.coli, plasmid sequences are found in RsAgo, its induction leads to plasmid degradation and suppression of genes encoded on foreign plasmids, suggesting it may also interfere with transcription. Does not interact with preformed gRNA:tDNA duplexes. Mismatches and nt bulges are tolerated in the ternary complex, however, they significantly reduce the affinity of RsAgo:gRNA for tDNA. Mismatched tDNA can cause dissociation of gRNA from RsAgo. In situ binds 2 populations of RNA (15-19 and 45 nucleotides, nt) and a population of ssDNA 22-24 nt in length. The small sense RNA is probably derived from mRNA degradation and strongly enriched for U in the first and U/C in the second positions. The small DNA is enriched for sequences complementary to the RNA, with 3 nt overhangs on both ends; another nuclease may trim the ends. The sequences are largely derived from exogenous plasmids or genome-encoded foreign elements such as prophages and transposons. Forms a ternary complex with gRNA and double-stranded tDNA only when the tDNA is open. The polypeptide is Protein argonaute (Cereibacter sphaeroides (strain ATCC 17025 / ATH 2.4.3) (Rhodobacter sphaeroides)).